Reading from the N-terminus, the 692-residue chain is Meiotic sister-chromatid recombination protein 6, mitochondrial (692 aa).

The transit peptide at 1–30 (MLSHNALRAFDCSKVIISRRCLTSSTSIYQ) directs the protein to the mitochondrion.

It localises to the mitochondrion. Functionally, may be involved in the control of meiotic sister-chromatid recombination. The chain is Meiotic sister-chromatid recombination protein 6, mitochondrial (MSC6) from Saccharomyces cerevisiae (strain ATCC 204508 / S288c) (Baker's yeast).